The primary structure comprises 594 residues: UvrABC system protein C (594 aa).

The GIY-YIG domain maps to 13–99 (HSSGVYQYFD…IKQLKPKYNI (87 aa)). The 36-residue stretch at 205–240 (DKLIKELELKMERLSNNLRFEEALIYRDRIAKIQKI) folds into the UVR domain.

This sequence belongs to the UvrC family. In terms of assembly, interacts with UvrB in an incision complex.

The protein resides in the cytoplasm. In terms of biological role, the UvrABC repair system catalyzes the recognition and processing of DNA lesions. UvrC both incises the 5' and 3' sides of the lesion. The N-terminal half is responsible for the 3' incision and the C-terminal half is responsible for the 5' incision. The sequence is that of UvrABC system protein C from Helicobacter pylori (strain HPAG1).